The primary structure comprises 198 residues: MPKIGMEPLRRRELIDAAIRTIGQRGSLDVTVAQIAHEAGVSPALAHHYFGGKDKLILATMRHLLRELGRDLNAAIKQANTPHERIAAIIAVNFSAAQFAQETIAAWLTFYVHAQQSDDIKRLLRIYARRLHSNLVFALEQLTSRARANRIAEGAGAMIDGLYIRHALGADVPDAASAIALVEDYIAIQLSGQPSAEN.

One can recognise an HTH tetR-type domain in the interval 8–68; it reads PLRRRELIDA…ATMRHLLREL (61 aa). A DNA-binding region (H-T-H motif) is located at residues 31–50; sequence TVAQIAHEAGVSPALAHHYF.

Its pathway is amine and polyamine biosynthesis; betaine biosynthesis via choline pathway [regulation]. Functionally, repressor involved in the biosynthesis of the osmoprotectant glycine betaine. It represses transcription of the choline transporter BetT and the genes of BetAB involved in the synthesis of glycine betaine. This is HTH-type transcriptional regulator BetI from Brucella suis (strain ATCC 23445 / NCTC 10510).